A 351-amino-acid chain; its full sequence is Phospho-N-acetylmuramoyl-pentapeptide-transferase (351 aa).

10 consecutive transmembrane segments (helical) span residues 17 to 37, 61 to 83, 88 to 105, 130 to 150, 158 to 178, 190 to 210, 230 to 250, 254 to 274, 279 to 299, and 328 to 348; these read TAYA…FIIS, MGIP…FFWI, IYFL…CLGF, ILFS…HVSI, SLKL…LISA, GLAI…AYLT, LVIF…FNAY, IMMG…VALI, ILFA…IIQV, and QVVI…LSTI.

Belongs to the glycosyltransferase 4 family. MraY subfamily. Mg(2+) is required as a cofactor.

The protein resides in the cell inner membrane. It catalyses the reaction UDP-N-acetyl-alpha-D-muramoyl-L-alanyl-gamma-D-glutamyl-meso-2,6-diaminopimeloyl-D-alanyl-D-alanine + di-trans,octa-cis-undecaprenyl phosphate = di-trans,octa-cis-undecaprenyl diphospho-N-acetyl-alpha-D-muramoyl-L-alanyl-D-glutamyl-meso-2,6-diaminopimeloyl-D-alanyl-D-alanine + UMP. It functions in the pathway cell wall biogenesis; peptidoglycan biosynthesis. Catalyzes the initial step of the lipid cycle reactions in the biosynthesis of the cell wall peptidoglycan: transfers peptidoglycan precursor phospho-MurNAc-pentapeptide from UDP-MurNAc-pentapeptide onto the lipid carrier undecaprenyl phosphate, yielding undecaprenyl-pyrophosphoryl-MurNAc-pentapeptide, known as lipid I. The sequence is that of Phospho-N-acetylmuramoyl-pentapeptide-transferase from Borrelia recurrentis (strain A1).